The following is a 486-amino-acid chain: Glutamyl-tRNA(Gln) amidotransferase subunit A (486 aa).

Residues Lys79 and Ser154 each act as charge relay system in the active site. Ser178 serves as the catalytic Acyl-ester intermediate.

It belongs to the amidase family. GatA subfamily. Heterotrimer of A, B and C subunits.

It carries out the reaction L-glutamyl-tRNA(Gln) + L-glutamine + ATP + H2O = L-glutaminyl-tRNA(Gln) + L-glutamate + ADP + phosphate + H(+). Allows the formation of correctly charged Gln-tRNA(Gln) through the transamidation of misacylated Glu-tRNA(Gln) in organisms which lack glutaminyl-tRNA synthetase. The reaction takes place in the presence of glutamine and ATP through an activated gamma-phospho-Glu-tRNA(Gln). This Dehalococcoides mccartyi (strain ATCC BAA-2266 / KCTC 15142 / 195) (Dehalococcoides ethenogenes (strain 195)) protein is Glutamyl-tRNA(Gln) amidotransferase subunit A.